We begin with the raw amino-acid sequence, 474 residues long: Aromatic amino acid aminotransferase C56E4.03 (474 aa).

It belongs to the class-I pyridoxal-phosphate-dependent aminotransferase family. The cofactor is pyridoxal 5'-phosphate.

It localises to the cytoplasm. It carries out the reaction an aromatic L-alpha-amino acid + 2-oxoglutarate = an aromatic oxo-acid + L-glutamate. Its function is as follows. Has aromatic amino acid transaminase activity. The chain is Aromatic amino acid aminotransferase C56E4.03 from Schizosaccharomyces pombe (strain 972 / ATCC 24843) (Fission yeast).